The chain runs to 161 residues: Putative 2'-deoxynucleoside 5'-phosphate N-hydrolase 1 (161 aa).

Substrate is bound by residues 27–33 (FLSGSIR), Tyr-42, His-60, Glu-106, and 128–130 (SSM).

This sequence belongs to the 2'-deoxynucleoside 5'-phosphate N-hydrolase 1 family. As to quaternary structure, monomer and homodimer.

It carries out the reaction a pyrimidine 2'-deoxyribonucleoside 5'-phosphate + H2O = a pyrimidine nucleobase + 2-deoxy-D-ribose 5-phosphate. The catalysed reaction is a purine 2'-deoxyribonucleoside 5'-phosphate + H2O = a purine nucleobase + 2-deoxy-D-ribose 5-phosphate. Functionally, catalyzes the cleavage of the N-glycosidic bond of deoxyribonucleoside 5'-monophosphates to yield deoxyribose 5-phosphate and a purine or pyrimidine base. In Methanosarcina mazei (strain ATCC BAA-159 / DSM 3647 / Goe1 / Go1 / JCM 11833 / OCM 88) (Methanosarcina frisia), this protein is Putative 2'-deoxynucleoside 5'-phosphate N-hydrolase 1.